The sequence spans 77 residues: Small VCP/p97-interacting protein (77 aa).

Disordered regions lie at residues 1–20 (MGLC…DLEE) and 25–77 (LAEA…WTVS). G2 carries N-myristoyl glycine lipidation. S-palmitoyl cysteine attachment occurs at residues C4 and C7. The interval 21–33 (KRAKLAEAAERRQ) is VCP/p97-interacting motif (VIM). Basic and acidic residues predominate over residues 25 to 37 (LAEAAERRQKEAA). S46 is subject to Phosphoserine.

This sequence belongs to the SVIP family. In terms of assembly, interacts (via VIM motif) with VCP/p97. Forms a complex with VCP/p97 and DERL1.

The protein localises to the membrane. It localises to the smooth endoplasmic reticulum membrane. It is found in the golgi apparatus membrane. Its subcellular location is the cell membrane. The protein resides in the lysosome membrane. Functionally, negative regulator of the ER-associated degradation pathway (ERAD) of misfolded proteins. It competes with AMFR/gp78 for binding VCP/p97, and inhibits AMFR/gp78-VCP/p97 complex formation that is required for degradation of ERAD substrates. Involved in the regulation of adrenal cortisol and dehydroepiandrosterone (DHEA) biosynthesis. In Homo sapiens (Human), this protein is Small VCP/p97-interacting protein (SVIP).